Consider the following 315-residue polypeptide: L-lactate dehydrogenase (315 aa).

Residues valine 17, aspartate 38, lysine 43, tyrosine 69, and 83–84 contribute to the NAD(+) site; that span reads GA. The substrate site is built by glutamine 86 and arginine 92. NAD(+) is bound by residues serine 105, 122–124, and serine 147; that span reads ATN. 124–127 serves as a coordination point for substrate; it reads NPVD. 152–155 serves as a coordination point for substrate; it reads DTAR. Positions 157 and 172 each coordinate beta-D-fructose 1,6-bisphosphate. The active-site Proton acceptor is histidine 179. Tyrosine 223 bears the Phosphotyrosine mark. Substrate is bound at residue threonine 232.

The protein belongs to the LDH/MDH superfamily. LDH family. In terms of assembly, homotetramer.

It localises to the cytoplasm. The enzyme catalyses (S)-lactate + NAD(+) = pyruvate + NADH + H(+). It functions in the pathway fermentation; pyruvate fermentation to lactate; (S)-lactate from pyruvate: step 1/1. With respect to regulation, allosterically activated by fructose 1,6-bisphosphate (FBP). In terms of biological role, catalyzes the conversion of lactate to pyruvate. The sequence is that of L-lactate dehydrogenase from Macrococcus caseolyticus (strain JCSC5402) (Macrococcoides caseolyticum).